Consider the following 240-residue polypeptide: Probable transcriptional regulatory protein PBPRB1582 (240 aa).

This sequence belongs to the TACO1 family.

The protein localises to the cytoplasm. This is Probable transcriptional regulatory protein PBPRB1582 from Photobacterium profundum (strain SS9).